The primary structure comprises 191 residues: Transcription factor FapR (191 aa).

It belongs to the FapR family.

Its function is as follows. Transcriptional factor involved in regulation of membrane lipid biosynthesis by repressing genes involved in fatty acid and phospholipid metabolism. The protein is Transcription factor FapR of Oceanobacillus iheyensis (strain DSM 14371 / CIP 107618 / JCM 11309 / KCTC 3954 / HTE831).